The primary structure comprises 251 residues: MTIQLINESSNTAKFQQICEKWQLVHDKSASLALVLTDTRLELRKLDEAKLGAIAVNFVDGTLAHRRKFGGGRGEAIAKAVGIKGNYLPSVIDATAGLGRDAFVLAAIGCKVTLVERHPVIAALLEDGLTRAYLDAEIGEFMQQRMQLANVHNIAQLDTTTQSADVVYLDPMYPHKQKSALVKKEMRVFQHLVGADLDADQFLLPAKALATKRVVVKRPDYAPPLAEQHPSFSQKTKNHRFDIYLSPLQKR.

S-adenosyl-L-methionine-binding positions include 100–101, 116–117, and Asp-170; these read RD and ER.

This sequence belongs to the methyltransferase superfamily. RsmJ family.

The protein localises to the cytoplasm. The catalysed reaction is guanosine(1516) in 16S rRNA + S-adenosyl-L-methionine = N(2)-methylguanosine(1516) in 16S rRNA + S-adenosyl-L-homocysteine + H(+). Its function is as follows. Specifically methylates the guanosine in position 1516 of 16S rRNA. The protein is Ribosomal RNA small subunit methyltransferase J of Haemophilus ducreyi (strain 35000HP / ATCC 700724).